The following is a 268-amino-acid chain: Hydroxyethylthiazole kinase (268 aa).

Residue methionine 45 coordinates substrate. Residues arginine 121 and threonine 167 each contribute to the ATP site. Glycine 194 is a binding site for substrate.

It belongs to the Thz kinase family. Mg(2+) serves as cofactor.

The enzyme catalyses 5-(2-hydroxyethyl)-4-methylthiazole + ATP = 4-methyl-5-(2-phosphooxyethyl)-thiazole + ADP + H(+). The protein operates within cofactor biosynthesis; thiamine diphosphate biosynthesis; 4-methyl-5-(2-phosphoethyl)-thiazole from 5-(2-hydroxyethyl)-4-methylthiazole: step 1/1. Catalyzes the phosphorylation of the hydroxyl group of 4-methyl-5-beta-hydroxyethylthiazole (THZ). This chain is Hydroxyethylthiazole kinase, found in Bacillus cereus (strain Q1).